The primary structure comprises 251 residues: Glutamate 5-kinase (251 aa).

ATP is bound at residue Lys7. Positions 45, 130, and 142 each coordinate substrate. Residues 162–163 (SD) and 204–210 (TGGIVTK) contribute to the ATP site.

This sequence belongs to the glutamate 5-kinase family.

The protein localises to the cytoplasm. It catalyses the reaction L-glutamate + ATP = L-glutamyl 5-phosphate + ADP. Its pathway is amino-acid biosynthesis; L-proline biosynthesis; L-glutamate 5-semialdehyde from L-glutamate: step 1/2. Functionally, catalyzes the transfer of a phosphate group to glutamate to form L-glutamate 5-phosphate. This chain is Glutamate 5-kinase, found in Campylobacter jejuni subsp. jejuni serotype O:6 (strain 81116 / NCTC 11828).